The chain runs to 599 residues: Calcium-dependent protein kinase 10 (599 aa).

G2 carries N-myristoyl glycine lipidation. Positions 27-110 (RQDGDDALPG…PRPRVPPVKR (84 aa)) are disordered. Over residues 74-84 (VSTTDTASAEQ) the composition is skewed to polar residues. Over residues 87–98 (SKSSAGSDSGEA) the composition is skewed to low complexity. The region spanning 133–391 (YSLGRKLGQG…AHEVLRHPWV (259 aa)) is the Protein kinase domain. Residues 139 to 147 (LGQGQFGTT) and K162 contribute to the ATP site. D257 functions as the Proton acceptor in the catalytic mechanism. An autoinhibitory domain region spans residues 397–427 (APDKPLDSAVLSRMKQFSAMNKLKKMALRVI). EF-hand domains are found at residues 434–469 (DEIA…VGAN), 470–505 (LQES…MNKI), 506–541 (ERED…FGLG), and 544–575 (QLEE…PTMG). Ca(2+) is bound by residues D447, D449, S451, Q453, E458, D483, D485, S487, T489, E494, D519, D521, S523, Y525, E530, D553, D555, D557, R559, and E564.

This sequence belongs to the protein kinase superfamily. Ser/Thr protein kinase family. CDPK subfamily. In terms of tissue distribution, expressed in roots.

It is found in the membrane. The catalysed reaction is L-seryl-[protein] + ATP = O-phospho-L-seryl-[protein] + ADP + H(+). It carries out the reaction L-threonyl-[protein] + ATP = O-phospho-L-threonyl-[protein] + ADP + H(+). With respect to regulation, activated by calcium. Autophosphorylation may play an important role in the regulation of the kinase activity. In terms of biological role, may play a role in signal transduction pathways that involve calcium as a second messenger. The sequence is that of Calcium-dependent protein kinase 10 from Oryza sativa subsp. japonica (Rice).